The sequence spans 134 residues: Small ribosomal subunit protein uS11 (134 aa).

This sequence belongs to the universal ribosomal protein uS11 family. As to quaternary structure, part of the 30S ribosomal subunit. Interacts with proteins S7 and S18. Binds to IF-3.

Located on the platform of the 30S subunit, it bridges several disparate RNA helices of the 16S rRNA. Forms part of the Shine-Dalgarno cleft in the 70S ribosome. This chain is Small ribosomal subunit protein uS11, found in Corynebacterium jeikeium (strain K411).